The chain runs to 154 residues: Putative pre-16S rRNA nuclease (154 aa).

Belongs to the YqgF nuclease family.

The protein resides in the cytoplasm. Functionally, could be a nuclease involved in processing of the 5'-end of pre-16S rRNA. In Rickettsia rickettsii (strain Iowa), this protein is Putative pre-16S rRNA nuclease.